A 447-amino-acid polypeptide reads, in one-letter code: GTPase Der (447 aa).

2 EngA-type G domains span residues 4-165 and 180-357; these read QIIA…PKEK and VQIV…KNWN. Residues 10 to 17, 57 to 61, 119 to 122, 186 to 193, 233 to 237, and 298 to 301 each bind GTP; these read GRPNVGKS, DTPGL, NKCE, GRPNAGKS, DTAGL, and NKWD. The KH-like domain occupies 358-443; that stretch reads KKITTSKLNE…PIRFAYVKTK (86 aa).

Belongs to the TRAFAC class TrmE-Era-EngA-EngB-Septin-like GTPase superfamily. EngA (Der) GTPase family. In terms of assembly, associates with the 50S ribosomal subunit.

Functionally, GTPase that plays an essential role in the late steps of ribosome biogenesis. The protein is GTPase Der of Rickettsia canadensis (strain McKiel).